The chain runs to 104 residues: Urease subunit beta (104 aa).

The protein belongs to the urease beta subunit family. Heterotrimer of UreA (gamma), UreB (beta) and UreC (alpha) subunits. Three heterotrimers associate to form the active enzyme.

The protein localises to the cytoplasm. It catalyses the reaction urea + 2 H2O + H(+) = hydrogencarbonate + 2 NH4(+). Its pathway is nitrogen metabolism; urea degradation; CO(2) and NH(3) from urea (urease route): step 1/1. The sequence is that of Urease subunit beta from Rhodococcus opacus (strain B4).